Reading from the N-terminus, the 173-residue chain is Peptide methionine sulfoxide reductase MsrA (173 aa).

The active site involves C10.

This sequence belongs to the MsrA Met sulfoxide reductase family.

The enzyme catalyses L-methionyl-[protein] + [thioredoxin]-disulfide + H2O = L-methionyl-(S)-S-oxide-[protein] + [thioredoxin]-dithiol. It carries out the reaction [thioredoxin]-disulfide + L-methionine + H2O = L-methionine (S)-S-oxide + [thioredoxin]-dithiol. Its function is as follows. Has an important function as a repair enzyme for proteins that have been inactivated by oxidation. Catalyzes the reversible oxidation-reduction of methionine sulfoxide in proteins to methionine. This chain is Peptide methionine sulfoxide reductase MsrA, found in Acinetobacter baumannii (strain AB307-0294).